The chain runs to 1898 residues: Receptor-type tyrosine-protein phosphatase F (1898 aa).

The N-terminal stretch at 1 to 29 (MAPEPAPGRRMVPLVPALVMLGLMAGAHG) is a signal peptide. The Extracellular portion of the chain corresponds to 30–1254 (DSKPVFVKVP…QQQEEPEMLW (1225 aa)). 3 consecutive Ig-like C2-type domains span residues 33–123 (PVFV…AKLS), 135–224 (PTID…ANLY), and 232–314 (PRFS…AQVT). Cysteine 54 and cysteine 107 are oxidised to a cystine. Heparin is bound at residue 68-77 (KKGKKVSSQR). The N-linked (GlcNAc...) asparagine glycan is linked to asparagine 117. A disulfide bridge connects residues cysteine 156 and cysteine 207. N-linked (GlcNAc...) asparagine glycans are attached at residues asparagine 250 and asparagine 295. A disulfide bond links cysteine 253 and cysteine 298. 8 consecutive Fibronectin type-III domains span residues 321–411 (PPID…TGEQ), 416–510 (PPRR…TQQG), 514–604 (QPAD…TAQS), 609–706 (PPQK…TDED), 711–810 (PPRK…TTGA), 811–905 (VPGR…PEDA), 909–1001 (FPQN…TMPM), and 1005–1089 (FAKN…TAPD). Positions 693–713 (GPESSPVLVRTDEDVPSGPPR) are disordered. An N-linked (GlcNAc...) asparagine glycan is attached at asparagine 721. 2 N-linked (GlcNAc...) asparagine glycosylation sites follow: asparagine 941 and asparagine 957. Residues 1255-1275 (VTGPVLAVILIILIVIAILLF) form a helical membrane-spanning segment. Residues 1276–1898 (KRKRTHSPSS…YLGSFDHYAT (623 aa)) lie on the Cytoplasmic side of the membrane. The residue at position 1296 (serine 1296) is a Phosphoserine. Tyrosine-protein phosphatase domains lie at 1343-1598 (FSQE…LLEA) and 1630-1889 (MELE…ALEY). Residues aspartate 1507, 1539–1545 (CSAGVGR), and glutamine 1583 each bind substrate. The active-site Phosphocysteine intermediate is the cysteine 1539. The Phosphocysteine intermediate role is filled by cysteine 1830.

The protein belongs to the protein-tyrosine phosphatase family. Receptor class 2A subfamily. As to quaternary structure, interacts with GRIP1. Interacts with PPFIA1, PPFIA2 and PPFIA3. Interacts with PTPRF.

The protein localises to the membrane. The enzyme catalyses O-phospho-L-tyrosyl-[protein] + H2O = L-tyrosyl-[protein] + phosphate. In terms of biological role, possible cell adhesion receptor. It possesses an intrinsic protein tyrosine phosphatase activity (PTPase) and dephosphorylates EPHA2 regulating its activity. The first PTPase domain has enzymatic activity, while the second one seems to affect the substrate specificity of the first one. This Rattus norvegicus (Rat) protein is Receptor-type tyrosine-protein phosphatase F (Ptprf).